A 174-amino-acid polypeptide reads, in one-letter code: Phytochrome-interacting ankyrin-repeat protein 2 (174 aa).

The segment covering 1 to 13 (MLQEPSAAFSLRR) has biased composition (low complexity). The segment at 1-29 (MLQEPSAAFSLRRNSFRRRSPRSNVDDRG) is disordered. Ser15 carries the phosphoserine modification. ANK repeat units lie at residues 28–57 (RGWN…DVNA), 65–94 (KGVS…NIDA), and 100–129 (CGWT…FLAD).

As to quaternary structure, interacts with phytochrome A (PHYA), both in Pr and Pfr forms. Binds to PIF3, a repressor of photomorphogenesis in response to phytochrome-mediated light signaling; this interaction may trigger the repression of PHYA-mediated PIF3 phosphorylation. Interacts with SIGE/SIG5 in mitochondrion. Interacts with RPS9M (via C terminus). In terms of processing, phosphorylated by PHYA. Mostly expressed in flowers, cotyledons, leaves and siliques, and, to a lower extent, in roots and stems. Also detected at low levels in seedlings grown in continuous dark or light conditions. Expressed in male and female gametophytes.

It is found in the cytoplasm. The protein resides in the nucleus. It localises to the mitochondrion. Its function is as follows. Promotes anthocyanin accumulation through interaction with PHYA, especially in response to far-red light, high light and sucrose treatment, probably by triggering A3G2XYLT/UF3GT expression. Required for gametophytes development as well as male-female gamete recognition during fertilization, possibly by regulating mitochondrial gene expression. Represses PHYA-mediated PIF3 phosphorylation. The polypeptide is Phytochrome-interacting ankyrin-repeat protein 2 (Arabidopsis thaliana (Mouse-ear cress)).